Consider the following 189-residue polypeptide: Protein GrpE (189 aa).

The interval 1–37 (MSDSSKEKKKKFADMVSRQKGDDQQSDNHKQTDDLNE) is disordered. Over residues 17-33 (SRQKGDDQQSDNHKQTD) the composition is skewed to basic and acidic residues.

The protein belongs to the GrpE family. Homodimer.

It is found in the cytoplasm. Its function is as follows. Participates actively in the response to hyperosmotic and heat shock by preventing the aggregation of stress-denatured proteins, in association with DnaK and GrpE. It is the nucleotide exchange factor for DnaK and may function as a thermosensor. Unfolded proteins bind initially to DnaJ; upon interaction with the DnaJ-bound protein, DnaK hydrolyzes its bound ATP, resulting in the formation of a stable complex. GrpE releases ADP from DnaK; ATP binding to DnaK triggers the release of the substrate protein, thus completing the reaction cycle. Several rounds of ATP-dependent interactions between DnaJ, DnaK and GrpE are required for fully efficient folding. The protein is Protein GrpE of Wolbachia sp. subsp. Drosophila simulans (strain wRi).